The following is a 575-amino-acid chain: Proline--tRNA ligase (575 aa).

The protein belongs to the class-II aminoacyl-tRNA synthetase family. ProS type 1 subfamily. In terms of assembly, homodimer.

The protein localises to the cytoplasm. It catalyses the reaction tRNA(Pro) + L-proline + ATP = L-prolyl-tRNA(Pro) + AMP + diphosphate. Its function is as follows. Catalyzes the attachment of proline to tRNA(Pro) in a two-step reaction: proline is first activated by ATP to form Pro-AMP and then transferred to the acceptor end of tRNA(Pro). As ProRS can inadvertently accommodate and process non-cognate amino acids such as alanine and cysteine, to avoid such errors it has two additional distinct editing activities against alanine. One activity is designated as 'pretransfer' editing and involves the tRNA(Pro)-independent hydrolysis of activated Ala-AMP. The other activity is designated 'posttransfer' editing and involves deacylation of mischarged Ala-tRNA(Pro). The misacylated Cys-tRNA(Pro) is not edited by ProRS. This is Proline--tRNA ligase from Desulfitobacterium hafniense (strain DSM 10664 / DCB-2).